The following is a 316-amino-acid chain: Acetaldehyde dehydrogenase (316 aa).

NAD(+) is bound at residue Ser-11–Ile-14. The active-site Acyl-thioester intermediate is Cys-131. NAD(+) contacts are provided by residues Ser-162–Asn-170 and Asn-289.

The protein belongs to the acetaldehyde dehydrogenase family. As to quaternary structure, interacts with MhpE.

The enzyme catalyses acetaldehyde + NAD(+) + CoA = acetyl-CoA + NADH + H(+). The protein operates within aromatic compound metabolism; 3-phenylpropanoate degradation. Its function is as follows. Catalyzes the conversion of acetaldehyde to acetyl-CoA, using NAD(+) and coenzyme A. Is the final enzyme in the meta-cleavage pathway for the degradation of aromatic compounds. This is Acetaldehyde dehydrogenase from Shigella sonnei (strain Ss046).